Reading from the N-terminus, the 163-residue chain is Putative 4-hydroxy-4-methyl-2-oxoglutarate aldolase (163 aa).

Substrate-binding positions include 79 to 82 (GDQL) and arginine 101. Aspartate 102 is a binding site for a divalent metal cation.

It belongs to the class II aldolase/RraA-like family. As to quaternary structure, homotrimer. The cofactor is a divalent metal cation.

It carries out the reaction 4-hydroxy-4-methyl-2-oxoglutarate = 2 pyruvate. The catalysed reaction is oxaloacetate + H(+) = pyruvate + CO2. Catalyzes the aldol cleavage of 4-hydroxy-4-methyl-2-oxoglutarate (HMG) into 2 molecules of pyruvate. Also contains a secondary oxaloacetate (OAA) decarboxylase activity due to the common pyruvate enolate transition state formed following C-C bond cleavage in the retro-aldol and decarboxylation reactions. The sequence is that of Putative 4-hydroxy-4-methyl-2-oxoglutarate aldolase from Dechloromonas aromatica (strain RCB).